The following is a 55-amino-acid chain: Small ribosomal subunit protein eS31 (55 aa).

4 residues coordinate Zn(2+): C21, C24, C39, and C42. Residues C21–C42 form a C4-type zinc finger.

It belongs to the eukaryotic ribosomal protein eS31 family. In terms of assembly, part of the 30S ribosomal subunit. Zn(2+) serves as cofactor.

This chain is Small ribosomal subunit protein eS31, found in Thermoplasma volcanium (strain ATCC 51530 / DSM 4299 / JCM 9571 / NBRC 15438 / GSS1).